Consider the following 314-residue polypeptide: Mitochondrial 2-oxoglutarate/malate carrier protein (314 aa).

Ala-2 is subject to N-acetylalanine. A Phosphoserine modification is found at Ser-6. 3 Solcar repeats span residues 23–108 (VKFL…LFER), 117–208 (PGFL…SKQF), and 217–306 (DNIL…MNKA). Residues 24–42 (KFLFGGLAGMGATVFVQPL) traverse the membrane as a helical segment. Lys-57 is subject to N6-succinyllysine. Lys-73 is modified (N6-acetyllysine). A helical transmembrane segment spans residues 83–101 (GLSAGLLRQATYTTTRLGI). Tyr-102 is modified (phosphotyrosine). Helical transmembrane passes span 119 to 140 (FLLK…GPPA), 183 to 202 (GCIP…LASY), and 222 to 240 (HFCA…SMPV). Residue Lys-256 is modified to N6-acetyllysine. Residues 281 to 300 (GFTPYYARLGPHTVLTFIFL) traverse the membrane as a helical segment.

It belongs to the mitochondrial carrier (TC 2.A.29) family. In terms of assembly, interacts with SMIM26. Expressed in liver, heart and brain.

It is found in the mitochondrion inner membrane. It carries out the reaction (S)-malate(in) + 2-oxoglutarate(out) = (S)-malate(out) + 2-oxoglutarate(in). It catalyses the reaction malonate(in) + 2-oxoglutarate(out) = malonate(out) + 2-oxoglutarate(in). The catalysed reaction is succinate(in) + 2-oxoglutarate(out) = succinate(out) + 2-oxoglutarate(in). The enzyme catalyses maleate(in) + 2-oxoglutarate(out) = maleate(out) + 2-oxoglutarate(in). It carries out the reaction oxaloacetate(in) + 2-oxoglutarate(out) = oxaloacetate(out) + 2-oxoglutarate(in). In terms of biological role, catalyzes the transport of 2-oxoglutarate (alpha-oxoglutarate) across the inner mitochondrial membrane in an electroneutral exchange for malate. Can also exchange 2-oxoglutarate for other dicarboxylic acids such as malonate, succinate, maleate and oxaloacetate, although with lower affinity. Contributes to several metabolic processes, including the malate-aspartate shuttle, the oxoglutarate/isocitrate shuttle, in gluconeogenesis from lactate, and in nitrogen metabolism. Maintains mitochondrial fusion and fission events, and the organization and morphology of cristae. Involved in the regulation of apoptosis. Helps protect from cytotoxic-induced apoptosis by modulating glutathione levels in mitochondria. This Rattus norvegicus (Rat) protein is Mitochondrial 2-oxoglutarate/malate carrier protein (Slc25a11).